The sequence spans 223 residues: MTSEVIEDEKQFYLKAKTYWKEVPPTVDGMLGGYGHISSIDISSSRKFLQRFLREGPNKTGTSCALDCGAGIGRITKRLLLPLFGVVDMVDVTEDFLIKARTYLGEEGKRVRNYFCCGLQDFSPEPNSYDVIWIQWVIGHLTDQHLAEFLRRCKQGLRPNGIIVIKDNMAQEGVILDDVDSSVCRDLDVVHRIVRSAGLSLLAEERQENLPDEIYHVYSLALR.

Position 1 is an N-acetylmethionine (Met-1). Thr-2 carries the post-translational modification N-acetylthreonine; in N-terminal Xaa-Pro-Lys N-methyltransferase 1, N-terminally processed. Residues Gly-69, Arg-74, 91–93, 119–120, and Gln-135 contribute to the S-adenosyl-L-methionine site; these read DVT and LQ.

This sequence belongs to the methyltransferase superfamily. NTM1 family.

The protein resides in the nucleus. The catalysed reaction is N-terminal L-alanyl-L-prolyl-L-lysyl-[protein] + 3 S-adenosyl-L-methionine = N-terminal N,N,N-trimethyl-L-alanyl-L-prolyl-L-lysyl-[protein] + 3 S-adenosyl-L-homocysteine + 3 H(+). It carries out the reaction N-terminal L-seryl-L-prolyl-L-lysyl-[protein] + 3 S-adenosyl-L-methionine = N-terminal N,N,N-trimethyl-L-seryl-L-prolyl-L-lysyl-[protein] + 3 S-adenosyl-L-homocysteine + 3 H(+). The enzyme catalyses N-terminal L-prolyl-L-prolyl-L-lysyl-[protein] + 2 S-adenosyl-L-methionine = N-terminal N,N-dimethyl-L-prolyl-L-prolyl-L-lysyl-[protein] + 2 S-adenosyl-L-homocysteine + 2 H(+). Its function is as follows. Distributive alpha-N-methyltransferase that methylates the N-terminus of target proteins containing the N-terminal motif [Ala/Gly/Pro/Ser]-Pro-Lys when the initiator Met is cleaved. Specifically catalyzes mono-, di- or tri-methylation of the exposed alpha-amino group of the Ala, Gly or Ser residue in the [Ala/Gly/Ser]-Pro-Lys motif and mono- or di-methylation of Pro in the Pro-Pro-Lys motif. Some of the substrates may be primed by NTMT2-mediated monomethylation. Catalyzes the trimethylation of the N-terminal Gly in CENPA (after removal of Met-1). Responsible for the N-terminal methylation of KLHL31, MYL2, MYL3, RB1, RCC1, RPL23A and SET. Required during mitosis for normal bipolar spindle formation and chromosome segregation via its action on RCC1. In Ailuropoda melanoleuca (Giant panda), this protein is N-terminal Xaa-Pro-Lys N-methyltransferase 1 (NTMT1).